Reading from the N-terminus, the 687-residue chain is Polyphosphate kinase (687 aa).

N45 contacts ATP. Positions 375 and 405 each coordinate Mg(2+). Residue H435 is the Phosphohistidine intermediate of the active site. Residues Y472, R568, and H596 each contribute to the ATP site.

This sequence belongs to the polyphosphate kinase 1 (PPK1) family. Mg(2+) serves as cofactor. An intermediate of this reaction is the autophosphorylated ppk in which a phosphate is covalently linked to a histidine residue through a N-P bond.

The catalysed reaction is [phosphate](n) + ATP = [phosphate](n+1) + ADP. In terms of biological role, catalyzes the reversible transfer of the terminal phosphate of ATP to form a long-chain polyphosphate (polyP). The protein is Polyphosphate kinase of Burkholderia vietnamiensis (strain G4 / LMG 22486) (Burkholderia cepacia (strain R1808)).